The sequence spans 105 residues: Large ribosomal subunit protein uL24 (105 aa).

The protein belongs to the universal ribosomal protein uL24 family. As to quaternary structure, part of the 50S ribosomal subunit.

Functionally, one of two assembly initiator proteins, it binds directly to the 5'-end of the 23S rRNA, where it nucleates assembly of the 50S subunit. Its function is as follows. One of the proteins that surrounds the polypeptide exit tunnel on the outside of the subunit. The chain is Large ribosomal subunit protein uL24 from Chromohalobacter salexigens (strain ATCC BAA-138 / DSM 3043 / CIP 106854 / NCIMB 13768 / 1H11).